The chain runs to 306 residues: NAD kinase 1 (306 aa).

Catalysis depends on Asp67, which acts as the Proton acceptor. NAD(+) contacts are provided by residues 67–68, 149–150, and Asp181; these read DG and ND.

It belongs to the NAD kinase family. Requires a divalent metal cation as cofactor.

It localises to the cytoplasm. The catalysed reaction is NAD(+) + ATP = ADP + NADP(+) + H(+). In terms of biological role, involved in the regulation of the intracellular balance of NAD and NADP, and is a key enzyme in the biosynthesis of NADP. Catalyzes specifically the phosphorylation on 2'-hydroxyl of the adenosine moiety of NAD to yield NADP. This is NAD kinase 1 from Synechococcus sp. (strain ATCC 27144 / PCC 6301 / SAUG 1402/1) (Anacystis nidulans).